A 355-amino-acid chain; its full sequence is Cyanide hydratase (355 aa).

The CN hydrolase domain occupies 6–285; that stretch reads YKAAAVTSEP…DGLLFVDIDL (280 aa). The Proton acceptor role is filled by E46. The active site involves K128. C163 (nucleophile) is an active-site residue.

Belongs to the carbon-nitrogen hydrolase superfamily. Nitrilase family. In terms of assembly, oligomer of dimers, forming left-handed helical fibers.

The catalysed reaction is formamide = hydrogen cyanide + H2O. Functionally, catalyzes the hydration of cyanide to formamide. Degradation of cyanide may be important for plant pathogenic fungi in infection of cyanogenic plants. This is Cyanide hydratase from Gibberella zeae (strain ATCC MYA-4620 / CBS 123657 / FGSC 9075 / NRRL 31084 / PH-1) (Wheat head blight fungus).